The primary structure comprises 591 residues: Aspartate--tRNA ligase (591 aa).

E173 provides a ligand contact to L-aspartate. Residues 197–200 (QLFK) form an aspartate region. R219 is an L-aspartate binding site. Residues 219–221 (RDE) and Q228 contribute to the ATP site. H448 is an L-aspartate binding site. E482 lines the ATP pocket. Residue R489 coordinates L-aspartate. Position 534-537 (534-537 (GLDR)) interacts with ATP.

It belongs to the class-II aminoacyl-tRNA synthetase family. Type 1 subfamily. As to quaternary structure, homodimer.

It localises to the cytoplasm. The catalysed reaction is tRNA(Asp) + L-aspartate + ATP = L-aspartyl-tRNA(Asp) + AMP + diphosphate. In terms of biological role, catalyzes the attachment of L-aspartate to tRNA(Asp) in a two-step reaction: L-aspartate is first activated by ATP to form Asp-AMP and then transferred to the acceptor end of tRNA(Asp). The protein is Aspartate--tRNA ligase of Shewanella amazonensis (strain ATCC BAA-1098 / SB2B).